The chain runs to 113 residues: T cell receptor alpha variable 8-4 (113 aa).

An N-terminal signal peptide occupies residues 1–20; the sequence is MLLLLVPVLEVIFTLGGTRA. The Ig-like domain occupies 21–113; that stretch reads QSVTQLGSHV…DAAEYFCAVS (93 aa). A disulfide bond links Cys-42 and Cys-110. Residue Asn-43 is glycosylated (N-linked (GlcNAc...) asparagine).

Alpha-beta TR is a heterodimer composed of an alpha and beta chain; disulfide-linked. The alpha-beta TR is associated with the transmembrane signaling CD3 coreceptor proteins to form the TR-CD3 (TcR or TCR). The assembly of alpha-beta TR heterodimers with CD3 occurs in the endoplasmic reticulum where a single alpha-beta TR heterodimer associates with one CD3D-CD3E heterodimer, one CD3G-CD3E heterodimer and one CD247 homodimer forming a stable octameric structure. CD3D-CD3E and CD3G-CD3E heterodimers preferentially associate with TR alpha and TR beta chains, respectively. The association of the CD247 homodimer is the last step of TcR assembly in the endoplasmic reticulum and is required for transport to the cell surface.

The protein localises to the cell membrane. Its function is as follows. V region of the variable domain of T cell receptor (TR) alpha chain that participates in the antigen recognition. Alpha-beta T cell receptors are antigen specific receptors which are essential to the immune response and are present on the cell surface of T lymphocytes. Recognize peptide-major histocompatibility (MH) (pMH) complexes that are displayed by antigen presenting cells (APC), a prerequisite for efficient T cell adaptive immunity against pathogens. Binding of alpha-beta TR to pMH complex initiates TR-CD3 clustering on the cell surface and intracellular activation of LCK that phosphorylates the ITAM motifs of CD3G, CD3D, CD3E and CD247 enabling the recruitment of ZAP70. In turn ZAP70 phosphorylates LAT, which recruits numerous signaling molecules to form the LAT signalosome. The LAT signalosome propagates signal branching to three major signaling pathways, the calcium, the mitogen-activated protein kinase (MAPK) kinase and the nuclear factor-kappa-B (NF-kB) pathways, leading to the mobilization of transcription factors that are critical for gene expression and essential for T cell growth and differentiation. The T cell repertoire is generated in the thymus, by V-(D)-J rearrangement. This repertoire is then shaped by intrathymic selection events to generate a peripheral T cell pool of self-MH restricted, non-autoaggressive T cells. Post-thymic interaction of alpha-beta TR with the pMH complexes shapes TR structural and functional avidity. The polypeptide is T cell receptor alpha variable 8-4 (Homo sapiens (Human)).